A 600-amino-acid chain; its full sequence is MVIPKEILSDFKELYEKANRLVEEESRNDPPTDPFRSHYKARDVLIVLKKQLDDQLVSVQASEEDGGQDDRCYHSLLAFVCRDLGRIYIYTEEQAEGEKMLNRCLELVTPFKECPEGIIPFIGAINELSIVLASKEEYNKGLEILLEAEKIYEDFKASGLKPLAIQDVFNPPEEGQQSHEAGPKELESLYTLVSFYMAQMYGHLGEPEKSAKCCHRTLHRQLESKTYDPIDFALNTATLSQFYIGEKRFEEARHHLAAATLIMAEYEVHMLEPEMSEKQRQDVSETFKHRYADVARCWAKYGLYLMNTSKLRLMRDEDDEDAKNLEIVLRNMRLVEAEQSRFPGLDLTACENRISCEYCLTFDDAKLVFHFVNEWLDIAKDYYKAENEATEYSKIMQDYAEAYEHIAFFEENPENQAKMQKRRAKYLEDLLDLLDPIFYMKICRECWYGAGTAHAAVMDVRLDIIRATSTPAPEDIKKVNQSCMKAIKHFESYVKSYLVKPPSEEWRPNMDVEEQRHMLYAHFHIGRIYYKLISGHPLQQLEHLTSCHTYYQRFDAGCQLHKEAAETLQGEIGVVREMLQLLPLKINTIKARLNKAGLTA.

Residues 384–434 are a coiled coil; sequence KAENEATEYSKIMQDYAEAYEHIAFFEENPENQAKMQKRRAKYLEDLLDLL.

It belongs to the KIF-binding protein family.

The protein localises to the cytoplasm. It is found in the cytoskeleton. The protein is KIF-binding protein of Drosophila melanogaster (Fruit fly).